Here is a 223-residue protein sequence, read N- to C-terminus: MEMERINENTIRVLVDNDDLSARGITILDLLGDHQQIEDFFYSILKEVDTDHQFQNNDAVTFQVMPTNNGLELFISKNDSNFAGNEQHGPINDQVSKYIKQHLIQKNSPDQDQRKTAINDSEDNEIQHTNWQVITFDSFEDLIDFAKIAESDDVSSYLYKYNDLYYLAIAYSDSILNSNDVKDQLALAYEYGNPTATTVDFLSEHGKKIMSVSALHLIRHYFE.

Belongs to the MecA family. In terms of assembly, homodimer.

Its function is as follows. Enables the recognition and targeting of unfolded and aggregated proteins to the ClpC protease or to other proteins involved in proteolysis. The polypeptide is Adapter protein MecA (Limosilactobacillus reuteri (strain DSM 20016) (Lactobacillus reuteri)).